The following is a 377-amino-acid chain: Malate dehydrogenase, cytoplasmic (377 aa).

Positions 2-5 (PHSV) match the Pro/N-degron motif. A Phosphothreonine modification is found at threonine 6. NAD(+) is bound by residues 20-26 (GAAGGIG) and aspartate 57. Substrate is bound by residues arginine 106 and arginine 112. Residues asparagine 119 and 144–146 (ISN) contribute to the NAD(+) site. The substrate site is built by asparagine 146 and arginine 185. Residue histidine 215 is the Proton acceptor of the active site. Methionine 266 provides a ligand contact to NAD(+).

It belongs to the LDH/MDH superfamily. MDH type 1 family. In terms of assembly, homodimer. Targeted for proteasomal degradation when cells are shifted to glucose-containing growth medium.

It localises to the cytoplasm. It catalyses the reaction (S)-malate + NAD(+) = oxaloacetate + NADH + H(+). Functionally, the isoenzyme MDH2 may function primarily in the glyoxylate cycle. The polypeptide is Malate dehydrogenase, cytoplasmic (MDH2) (Saccharomyces cerevisiae (strain ATCC 204508 / S288c) (Baker's yeast)).